The primary structure comprises 955 residues: Kinesin-like protein K39 (955 aa).

A Kinesin motor domain is found at 12–392 (RVKVSVRVRP…LRYASRARDI (381 aa)). 122 to 129 (GQTGSGKT) lines the ATP pocket. Residues 426 to 955 (PAYVSELKKK…EERAAELASQ (530 aa)) are a coiled coil. Disordered stretches follow at residues 682–712 (ELDA…RESE) and 725–955 (TAAA…LASQ). 7 consecutive repeat copies span residues 704-742 (LEQQ…TRAT), 743-781 (LEQQ…TRAT), 782-820 (LEQQ…TRAT), 821-859 (LEQQ…TRAT), 860-898 (LEQQ…TRAT), 899-937 (LEQQ…TRAA), and 938-955 (LEQQ…LASQ). A 7 X 39 AA approximate tandem repeats region spans residues 704–955 (LEQQLRESEE…EERAAELASQ (252 aa)). Basic and acidic residues-rich tracts occupy residues 785 to 794 (QLRDSEERAA), 824 to 833 (QLRDSEERAA), 863 to 872 (QLRESEERAA), 902 to 911 (QLRDSEERAA), and 941 to 955 (QLRD…LASQ).

The protein belongs to the TRAFAC class myosin-kinesin ATPase superfamily. Kinesin family.

It localises to the cytoplasm. Its subcellular location is the cytoskeleton. This Leishmania chagasi protein is Kinesin-like protein K39 (KIN).